Here is an 848-residue protein sequence, read N- to C-terminus: Trimethylamine-N-oxide reductase 1 (848 aa).

Positions Met1 to Ala39 form a signal peptide, tat-type signal. Residue Ser191 participates in Mo-bis(molybdopterin guanine dinucleotide) binding.

Belongs to the prokaryotic molybdopterin-containing oxidoreductase family. The cofactor is Mo-bis(molybdopterin guanine dinucleotide). In terms of processing, predicted to be exported by the Tat system. The position of the signal peptide cleavage has not been experimentally proven.

The protein resides in the periplasm. The catalysed reaction is trimethylamine + 2 Fe(III)-[cytochrome c] + H2O = trimethylamine N-oxide + 2 Fe(II)-[cytochrome c] + 3 H(+). Reduces trimethylamine-N-oxide (TMAO) into trimethylamine; an anaerobic reaction coupled to energy-yielding reactions. This chain is Trimethylamine-N-oxide reductase 1 (torA), found in Escherichia coli O6:H1 (strain CFT073 / ATCC 700928 / UPEC).